A 251-amino-acid chain; its full sequence is Pyrroloquinoline-quinone synthase (251 aa).

The protein belongs to the PqqC family.

It carries out the reaction 6-(2-amino-2-carboxyethyl)-7,8-dioxo-1,2,3,4,7,8-hexahydroquinoline-2,4-dicarboxylate + 3 O2 = pyrroloquinoline quinone + 2 H2O2 + 2 H2O + H(+). It functions in the pathway cofactor biosynthesis; pyrroloquinoline quinone biosynthesis. Its function is as follows. Ring cyclization and eight-electron oxidation of 3a-(2-amino-2-carboxyethyl)-4,5-dioxo-4,5,6,7,8,9-hexahydroquinoline-7,9-dicarboxylic-acid to PQQ. The polypeptide is Pyrroloquinoline-quinone synthase (Klebsiella pneumoniae subsp. pneumoniae (strain ATCC 700721 / MGH 78578)).